The sequence spans 107 residues: Large ribosomal subunit protein eL33A (107 aa).

Alanine 2 is modified (N-acetylalanine; partial). A Glycyl lysine isopeptide (Lys-Gly) (interchain with G-Cter in ubiquitin) cross-link involves residue lysine 47.

Belongs to the eukaryotic ribosomal protein eL33 family. In terms of assembly, component of the large ribosomal subunit (LSU). Mature yeast ribosomes consist of a small (40S) and a large (60S) subunit. The 40S small subunit contains 1 molecule of ribosomal RNA (18S rRNA) and 33 different proteins (encoded by 57 genes). The large 60S subunit contains 3 rRNA molecules (25S, 5.8S and 5S rRNA) and 46 different proteins (encoded by 81 genes). In terms of processing, N-terminally acetylated by acetyltransferase NatA.

Its subcellular location is the cytoplasm. Its function is as follows. Component of the ribosome, a large ribonucleoprotein complex responsible for the synthesis of proteins in the cell. The small ribosomal subunit (SSU) binds messenger RNAs (mRNAs) and translates the encoded message by selecting cognate aminoacyl-transfer RNA (tRNA) molecules. The large subunit (LSU) contains the ribosomal catalytic site termed the peptidyl transferase center (PTC), which catalyzes the formation of peptide bonds, thereby polymerizing the amino acids delivered by tRNAs into a polypeptide chain. The nascent polypeptides leave the ribosome through a tunnel in the LSU and interact with protein factors that function in enzymatic processing, targeting, and the membrane insertion of nascent chains at the exit of the ribosomal tunnel. The polypeptide is Large ribosomal subunit protein eL33A (Saccharomyces cerevisiae (strain ATCC 204508 / S288c) (Baker's yeast)).